The sequence spans 407 residues: METYETSIGTQSYPPTLFPPPLGTGGFTTSGYIHALVDSTSNSNSNSNTNSNTNSNTNSNSDTKIPIVQISDDSHITHDSFKPYMEYHDASHLRNRNISKADQVESTEVMEQFTQWSNYKMRSRSPTINAKPIRHTSQRRTDFTSKNELSKFSKNHNFIFHKGFLKRQHSIRREDRQAKVRSRFRSKKELTSVLNYIELEQMDIANVLASQPVNLHAIRNLTSRDPAVTPIPFLRSQMYATSSRPPYLRNRSISRKLPKSQPGSLPTTMPATATKTIKQNSTTPTTRSVYNKNVGRSNTSPSVLYHPKRRGKLNTKSHARKEQLLLELWREYLMLVITQRTQLRLTLLCSPGSASNESSVCSSNASDLDMSLLSTPSSLFQMAGETKSNPIIIPDSQDDSILSSDPF.

The segment covering 41–61 (SNSNSNSNTNSNTNSNTNSNS) has biased composition (low complexity). A disordered region spans residues 41–64 (SNSNSNSNTNSNTNSNTNSNSDTK). Phosphoserine occurs at positions 260, 264, 300, and 302. The span at 277–302 (IKQNSTTPTTRSVYNKNVGRSNTSPS) shows a compositional bias: polar residues. The disordered stretch occupies residues 277–315 (IKQNSTTPTTRSVYNKNVGRSNTSPSVLYHPKRRGKLNT). The segment covering 306–315 (HPKRRGKLNT) has biased composition (basic residues). The SUMO-binding signature appears at 391–398 (IIIPDSQD).

In terms of assembly, interacts with CBF2, GIS1, NAP1, PRM8, REI1, SHS1 and SMT3.

It localises to the bud neck. The protein localises to the cytoplasm. Its subcellular location is the cell cortex. Functionally, may be involved in a mitotic signaling network. Binds sumoylated proteins and may stabilize SUMO chains. The protein is Protein NIS1 (NIS1) of Saccharomyces cerevisiae (strain ATCC 204508 / S288c) (Baker's yeast).